The sequence spans 139 residues: 6,7-dimethyl-8-ribityllumazine synthase (139 aa).

5-amino-6-(D-ribitylamino)uracil-binding positions include Phe-11, 42 to 44 (ALE), and 66 to 68 (VVI). 71-72 (ET) lines the (2S)-2-hydroxy-3-oxobutyl phosphate pocket. His-74 functions as the Proton donor in the catalytic mechanism. Asn-98 is a binding site for 5-amino-6-(D-ribitylamino)uracil. Arg-112 lines the (2S)-2-hydroxy-3-oxobutyl phosphate pocket.

The protein belongs to the DMRL synthase family.

The enzyme catalyses (2S)-2-hydroxy-3-oxobutyl phosphate + 5-amino-6-(D-ribitylamino)uracil = 6,7-dimethyl-8-(1-D-ribityl)lumazine + phosphate + 2 H2O + H(+). It functions in the pathway cofactor biosynthesis; riboflavin biosynthesis; riboflavin from 2-hydroxy-3-oxobutyl phosphate and 5-amino-6-(D-ribitylamino)uracil: step 1/2. Functionally, catalyzes the formation of 6,7-dimethyl-8-ribityllumazine by condensation of 5-amino-6-(D-ribitylamino)uracil with 3,4-dihydroxy-2-butanone 4-phosphate. This is the penultimate step in the biosynthesis of riboflavin. In Zymomonas mobilis subsp. mobilis (strain ATCC 31821 / ZM4 / CP4), this protein is 6,7-dimethyl-8-ribityllumazine synthase.